Here is a 392-residue protein sequence, read N- to C-terminus: NAC domain-containing protein 58 (392 aa).

The 165-residue stretch at 9 to 173 folds into the NAC domain; sequence LPPGFRFHPT…DWVLCRIYKK (165 aa). Residues 317–345 form a disordered region; that stretch reads STSAGAVVEPPAVTGKRKRSSDGGEPTIQ.

As to expression, expressed in leaves, nodes, internodes and mature seeds. Highly expressed in roots. Expressed in leaf sheaths, flag leaves and inflorescences. Expressed in primary and lateral roots, particularly in the vascular tissues. Expressed in the primary phloem of the culm and leaf sheaths. Expressed principally in the primary phloem and in the peripheral zone of the leaf vascular bundles. Expressed in the floral tissues.

It is found in the nucleus. Transcription factor that acts as a positive regulator of the jasmonate (JA) pathway to mediate leaf senescence. May directly regulate LOX2, AOC, AOS2, AOC1 and OPR7, which are genes involved in the biosynthesis of JA. Regulates positively leaf senescence by directly targeting senescence-associated genes (SAGs) related to chlorophyll degradation, nutrient transport and other genes associated with abscisic acid-induced leaf senescence. Transcription activator that plays a role in mediating abiotic stress responses through the abscisic acid (ABA) pathway. Possesses transcriptional activator activity in yeast. In Oryza sativa subsp. japonica (Rice), this protein is NAC domain-containing protein 58.